An 835-amino-acid polypeptide reads, in one-letter code: BCL11 transcription factor A (835 aa).

A compositionally biased stretch (basic residues) spans 1 to 12 (MSRRKQGKPQHL). The tract at residues 1–41 (MSRRKQGKPQHLSKREFSPEPLEAILTDDEPDHGPLGAPEG) is disordered. The interval 1–210 (MSRRKQGKPQ…SEHGSPLTPR (210 aa)) is required for nuclear body formation and for SUMO1 recruitment. The C2HC-type zinc finger occupies 45–71 (LLTCGQCQMNFPLGDILIFIEHKRKQC). Positions 48, 51, 66, and 71 each coordinate Zn(2+). A Phosphoserine modification is found at serine 86. Residue lysine 123 forms a Glycyl lysine isopeptide (Lys-Gly) (interchain with G-Cter in SUMO2) linkage. Isoleucine 162 is modified (phosphothreonine). Lysine 164 participates in a covalent cross-link: Glycyl lysine isopeptide (Lys-Gly) (interchain with G-Cter in SUMO2). The segment at 170–193 (YTCTTCKQPFTSAWFLLQHAQNTH) adopts a C2H2-type 1 zinc-finger fold. Serine 205 is subject to Phosphoserine. At proline 214 the chain carries Phosphothreonine. Position 271 is an asymmetric dimethylarginine (arginine 271). The interval 323–376 (AGNTSSPPLSPGRPSPMQRLLQPFQPGSKPPFLATPPLPPLQSAPPPSQPPVKS) is disordered. 2 positions are modified to phosphoserine: serine 332 and serine 337. The segment covering 355–372 (LATPPLPPLQSAPPPSQP) has biased composition (pro residues). 2 consecutive C2H2-type zinc fingers follow at residues 377-399 (KSCE…RRSH) and 405-429 (YKCN…THMH). Over residues 421-430 (KRHMKTHMHK) the composition is skewed to basic residues. Disordered regions lie at residues 421 to 458 (KRHM…LVGS), 471 to 512 (KSEN…ERVD), and 572 to 619 (RSHL…GLSK). Polar residues predominate over residues 441–450 (GLSTASSPEP). Residues serine 446 and serine 447 each carry the phosphoserine modification. The span at 482-506 (NGDEEEEEDDEEEEEEEEEEEEELT) shows a compositional bias: acidic residues. Residues 574-584 (HLAEAEGHRDT) show a composition bias toward basic and acidic residues. Position 608 is a phosphoserine (serine 608). A Glycyl lysine isopeptide (Lys-Gly) (interchain with G-Cter in SUMO2) cross-link involves residue lysine 620. Residues serine 625 and serine 630 each carry the phosphoserine modification. Lysine 634 is covalently cross-linked (Glycyl lysine isopeptide (Lys-Gly) (interchain with G-Cter in SUMO1)). The span at 682 to 696 (SPFASSSEHSSENGS) shows a compositional bias: low complexity. Threonine 701 carries the phosphothreonine modification. The segment covering 706 to 720 (LDGGISGRSGTGSGG) has biased composition (gly residues). Residues 737-835 (EGRRSDTCEY…RVLNNDIKTE (99 aa)) are DNA-binding. The C2H2-type 4 zinc finger occupies 742 to 764 (DTCEYCGKVFKNCSNLTVHRRSH). The Zn(2+) site is built by cysteine 744, cysteine 747, histidine 760, and histidine 764. A compositionally biased stretch (polar residues) spans 764–773 (HTGERPYKCE). The segment at 765-769 (TGERP) is disordered. The C2H2-type 5 zinc finger occupies 770–792 (YKCELCNYACAQSSKLTRHMKTH). Cysteine 772, cysteine 775, histidine 788, and histidine 792 together coordinate Zn(2+). Residues 793–799 (GQVGKDV) are disordered. The C2H2-type 6 zinc finger occupies 800–823 (YKCEICKMPFSVYSTLEKHMKKWH). Residues cysteine 802, cysteine 805, histidine 818, and histidine 823 each contribute to the Zn(2+) site.

In terms of assembly, homotetrameric; self-associates via C2HC-type zinc finger domain. Interacts with MTA2, a component of the nucleosome remodeling and deacetylase (NuRD) repressor complex. Interacts with NR2F1, PIAS3, NR2F2 and NR2F6. Interacts with TBR1. Sumoylated with SUMO1. Isoforms are expressed in a tissue-specific fashion. Isoforms 1, isoform 2, and isoform 3 are expressed at similar levels in testis, kidney and spleen. Isoform 1 is expressed in the stomach, and isoform 2 is expressed exclusively in the lung. Overexpression following proviral integration in hematopoietic cells results in the generation of myeloid leukemia.

The protein localises to the cytoplasm. It is found in the nucleus. In terms of biological role, transcription factor. Associated with the BAF SWI/SNF chromatin remodeling complex. Binds to the 5'-TGACCA-3' sequence motif in regulatory regions of target genes. Involved in brain development. May play a role in hematopoiesis. Essential factor in lymphopoiesis, required for B-cell formation in fetal liver. May function as a modulator of the transcriptional repression activity of NR2F2. This is BCL11 transcription factor A (Bcl11a) from Mus musculus (Mouse).